The chain runs to 177 residues: ATP-dependent protease subunit HslV (177 aa).

Thr2 is a catalytic residue. Na(+) is bound by residues Ala159, Asp162, and Thr165.

This sequence belongs to the peptidase T1B family. HslV subfamily. In terms of assembly, a double ring-shaped homohexamer of HslV is capped on each side by a ring-shaped HslU homohexamer. The assembly of the HslU/HslV complex is dependent on binding of ATP.

The protein localises to the cytoplasm. The catalysed reaction is ATP-dependent cleavage of peptide bonds with broad specificity.. Its activity is regulated as follows. Allosterically activated by HslU binding. Functionally, protease subunit of a proteasome-like degradation complex believed to be a general protein degrading machinery. The protein is ATP-dependent protease subunit HslV of Lactobacillus leichmannii.